We begin with the raw amino-acid sequence, 98 residues long: Large ribosomal subunit protein uL23c (98 aa).

The protein belongs to the universal ribosomal protein uL23 family. Part of the 50S ribosomal subunit.

It localises to the plastid. Functionally, binds to 23S rRNA. The sequence is that of Large ribosomal subunit protein uL23c (rpl23) from Euglena longa (Euglenophycean alga).